Here is a 358-residue protein sequence, read N- to C-terminus: Alanine racemase (358 aa).

The active-site Proton acceptor; specific for D-alanine is K35. K35 carries the post-translational modification N6-(pyridoxal phosphate)lysine. R131 is a binding site for substrate. The active-site Proton acceptor; specific for L-alanine is Y253. M301 serves as a coordination point for substrate.

It belongs to the alanine racemase family. Requires pyridoxal 5'-phosphate as cofactor.

It catalyses the reaction L-alanine = D-alanine. Its pathway is amino-acid biosynthesis; D-alanine biosynthesis; D-alanine from L-alanine: step 1/1. In terms of biological role, catalyzes the interconversion of L-alanine and D-alanine. May also act on other amino acids. In Alteromonas mediterranea (strain DSM 17117 / CIP 110805 / LMG 28347 / Deep ecotype), this protein is Alanine racemase (alr).